The sequence spans 315 residues: Peroxidase 1 (315 aa).

The signal sequence occupies residues 1-21; sequence MASSSYTSLLVLVALVTAASA. Pyrrolidone carboxylic acid is present on glutamine 22. Cystine bridges form between cysteine 32–cysteine 107, cysteine 65–cysteine 70, cysteine 113–cysteine 310, and cysteine 193–cysteine 219. The Proton acceptor role is filled by histidine 63. Aspartate 64, valine 67, glycine 69, aspartate 71, and serine 73 together coordinate Ca(2+). A substrate-binding site is contributed by proline 155. N-linked (GlcNAc...) asparagine glycosylation occurs at asparagine 158. Position 186 (histidine 186) interacts with heme b. Residue threonine 187 coordinates Ca(2+). Positions 234, 237, and 242 each coordinate Ca(2+). The N-linked (GlcNAc...) asparagine glycan is linked to asparagine 265.

It belongs to the peroxidase family. Classical plant (class III) peroxidase subfamily. Requires Ca(2+) as cofactor. The cofactor is heme b.

It is found in the secreted. It catalyses the reaction 2 a phenolic donor + H2O2 = 2 a phenolic radical donor + 2 H2O. Its function is as follows. Removal of H(2)O(2), oxidation of toxic reductants, biosynthesis and degradation of lignin, suberization, auxin catabolism, response to environmental stresses such as wounding, pathogen attack and oxidative stress. These functions might be dependent on each isozyme/isoform in each plant tissue. In terms of biological role, involved in defense response to powdery meldew fungus. The sequence is that of Peroxidase 1 from Hordeum vulgare (Barley).